We begin with the raw amino-acid sequence, 272 residues long: Prohibitin 1 (272 aa).

Ala-2 carries the N-acetylalanine modification. Residue Thr-91 is modified to Phosphothreonine. 2 positions are modified to N6-acetyllysine: Lys-128 and Lys-186. Positions 177–211 (KEFTEAVEAKQVAQQEAERARFVVEKAEQQKKAAI) form a coiled coil. Lys-202 carries the post-translational modification N6-acetyllysine; alternate. At Lys-202 the chain carries N6-succinyllysine; alternate. Position 249 is a phosphotyrosine (Tyr-249).

The protein belongs to the prohibitin family. As to quaternary structure, the mitochondrial prohibitin complex consists of two subunits (PHB1 and PHB2), assembled into a membrane-associated ring-shaped supercomplex of approximately 1 mDa. Interacts with STOML2. Interacts with MAP1LC3B (membrane-bound form LC3-II); the interaction requires PHB2 and takes place upon Parkin-mediated mitochondrial damage. Interacts with STAT3 (unphosphorylated or phosphorylated at 'Ser-727'). Interacts with CLPB. Interacts with CD86 (via cytoplasmic domain); the interactions increases after priming with CD40.

Its subcellular location is the mitochondrion inner membrane. It localises to the nucleus. The protein localises to the cytoplasm. The protein resides in the cell membrane. Functionally, protein with pleiotropic attributes mediated in a cell-compartment- and tissue-specific manner, which include the plasma membrane-associated cell signaling functions, mitochondrial chaperone, and transcriptional co-regulator of transcription factors in the nucleus. Plays a role in adipose tissue and glucose homeostasis in a sex-specific manner. Contributes to pulmonary vascular remodeling by accelerating proliferation of pulmonary arterial smooth muscle cells. In terms of biological role, in the mitochondria, together with PHB2, forms large ring complexes (prohibitin complexes) in the inner mitochondrial membrane (IMM) and functions as a chaperone protein that stabilizes mitochondrial respiratory enzymes and maintains mitochondrial integrity in the IMM, which is required for mitochondrial morphogenesis, neuronal survival, and normal lifespan. The prohibitin complex, with DNAJC19, regulates cardiolipin remodeling and the protein turnover of OMA1 in a cardiolipin-binding manner. Regulates mitochondrial respiration activity playing a role in cellular aging. The prohibitin complex plays a role of mitophagy receptor involved in targeting mitochondria for autophagic degradation. Involved in mitochondrial-mediated antiviral innate immunity, activates RIG-I-mediated signal transduction and production of IFNB1 and proinflammatory cytokine IL6. In the nucleus, acts as a transcription coregulator, enhances promoter binding by TP53, a transcription factor it activates, but reduces the promoter binding by E2F1, a transcription factor it represses. Interacts with STAT3 to affect IL17 secretion in T-helper Th17 cells. Its function is as follows. In the plasma membrane, cooperates with CD86 to mediate CD86-signaling in B lymphocytes that regulates the level of IgG1 produced through the activation of distal signaling intermediates. Upon CD40 engagement, required to activate NF-kappa-B signaling pathway via phospholipase C and protein kinase C activation. The chain is Prohibitin 1 (PHB1) from Bos taurus (Bovine).